A 270-amino-acid polypeptide reads, in one-letter code: Thiazole synthase (270 aa).

K112 functions as the Schiff-base intermediate with DXP in the catalytic mechanism. 1-deoxy-D-xylulose 5-phosphate is bound by residues G173, 199–200 (AG), and 221–222 (NS).

It belongs to the ThiG family. Homotetramer. Forms heterodimers with either ThiH or ThiS.

The protein resides in the cytoplasm. The catalysed reaction is [ThiS sulfur-carrier protein]-C-terminal-Gly-aminoethanethioate + 2-iminoacetate + 1-deoxy-D-xylulose 5-phosphate = [ThiS sulfur-carrier protein]-C-terminal Gly-Gly + 2-[(2R,5Z)-2-carboxy-4-methylthiazol-5(2H)-ylidene]ethyl phosphate + 2 H2O + H(+). The protein operates within cofactor biosynthesis; thiamine diphosphate biosynthesis. Catalyzes the rearrangement of 1-deoxy-D-xylulose 5-phosphate (DXP) to produce the thiazole phosphate moiety of thiamine. Sulfur is provided by the thiocarboxylate moiety of the carrier protein ThiS. In vitro, sulfur can be provided by H(2)S. In Pseudomonas putida (strain ATCC 700007 / DSM 6899 / JCM 31910 / BCRC 17059 / LMG 24140 / F1), this protein is Thiazole synthase.